The chain runs to 835 residues: Microcephalin (835 aa).

The region spanning 1 to 93 (MAAPILKDVV…AHIDESLFPA (93 aa)) is the BRCT 1 domain. Phosphoserine occurs at positions 279, 287, 296, and 333. 2 disordered regions span residues 313 to 381 (PDQK…RRSI) and 419 to 443 (DNLKERYSENLPPESQLPSSPAQLS). Threonine 335 is subject to Phosphothreonine. Over residues 343–361 (LLIHSRPRSSSVKRKRVSH) the composition is skewed to basic residues. Residues 434–443 (QLPSSPAQLS) show a composition bias toward polar residues. At serine 548 the chain carries Phosphoserine. The disordered stretch occupies residues 555 to 584 (AVGLKSTQNKGTTSKISNSSEGEAQSEHEP). A compositionally biased stretch (polar residues) spans 559–577 (KSTQNKGTTSKISNSSEGE). BRCT domains follow at residues 640–730 (SGRG…PFEL) and 751–833 (YRGT…NYLL).

As to quaternary structure, interacts with CDC27 and maybe other components of the APC/C complex. Interacts with histone variant H2AX under DNA damage conditions. In terms of tissue distribution, expressed in fetal brain, liver and kidney.

Its subcellular location is the cytoplasm. The protein localises to the cytoskeleton. The protein resides in the microtubule organizing center. It localises to the centrosome. Functionally, implicated in chromosome condensation and DNA damage induced cellular responses. May play a role in neurogenesis and regulation of the size of the cerebral cortex. This chain is Microcephalin, found in Homo sapiens (Human).